The chain runs to 432 residues: 23S rRNA (uracil(1939)-C(5))-methyltransferase RlmD (432 aa).

In terms of domain architecture, TRAM spans 1–53 (MPIGKIESLDHEARGITRQEGKAIFVDGALPGETVEYASFRRKSKFELAHLVH). [4Fe-4S] cluster is bound by residues Cys66, Cys72, Cys75, and Cys154. S-adenosyl-L-methionine-binding residues include Gln263, Phe292, Asn297, Glu313, Asn341, and Asp362. Cys388 serves as the catalytic Nucleophile.

Belongs to the class I-like SAM-binding methyltransferase superfamily. RNA M5U methyltransferase family. RlmD subfamily.

It carries out the reaction uridine(1939) in 23S rRNA + S-adenosyl-L-methionine = 5-methyluridine(1939) in 23S rRNA + S-adenosyl-L-homocysteine + H(+). Its function is as follows. Catalyzes the formation of 5-methyl-uridine at position 1939 (m5U1939) in 23S rRNA. The protein is 23S rRNA (uracil(1939)-C(5))-methyltransferase RlmD of Dechloromonas aromatica (strain RCB).